The chain runs to 117 residues: Large ribosomal subunit protein uL22 (117 aa).

Belongs to the universal ribosomal protein uL22 family. In terms of assembly, part of the 50S ribosomal subunit.

This protein binds specifically to 23S rRNA; its binding is stimulated by other ribosomal proteins, e.g. L4, L17, and L20. It is important during the early stages of 50S assembly. It makes multiple contacts with different domains of the 23S rRNA in the assembled 50S subunit and ribosome. Functionally, the globular domain of the protein is located near the polypeptide exit tunnel on the outside of the subunit, while an extended beta-hairpin is found that lines the wall of the exit tunnel in the center of the 70S ribosome. The protein is Large ribosomal subunit protein uL22 of Lactobacillus gasseri (strain ATCC 33323 / DSM 20243 / BCRC 14619 / CIP 102991 / JCM 1131 / KCTC 3163 / NCIMB 11718 / NCTC 13722 / AM63).